We begin with the raw amino-acid sequence, 261 residues long: Cytochrome c oxidase subunit 3 (261 aa).

Topologically, residues 1-15 (MAHQAHSYHMVDPSP) are mitochondrial matrix. Residues 16-34 (WPIFGATAALLTTSGLIMW) traverse the membrane as a helical segment. Residues 35-40 (FHYNSL) are Mitochondrial intermembrane-facing. Residues 41–66 (YLLTLGLLSMFLVMIQWWRDIVREST) form a helical membrane-spanning segment. The Mitochondrial matrix portion of the chain corresponds to 67 to 72 (FQGHHT). A helical transmembrane segment spans residues 73-105 (PTVQKGLRYGMILFITSEAFFFLGFFWAFFHSS). The Mitochondrial intermembrane portion of the chain corresponds to 106–128 (LAPTPELGAQWPPTGINPLNPLE). Residues 129–152 (VPLLNTAILLASGVTVTWAHHSIT) traverse the membrane as a helical segment. At 153 to 155 (ESN) the chain is on the mitochondrial matrix side. A helical membrane pass occupies residues 156 to 183 (RKQAIHALSLTIILGFYFTALQAMEYHE). Residues 184–190 (ASFSIAD) are Mitochondrial intermembrane-facing. A helical transmembrane segment spans residues 191–223 (GVYGSTFFVATGFHGLHVIIGSSFLTVCLLRLI). Residues 224 to 232 (KFHFTTNHH) are Mitochondrial matrix-facing. A helical membrane pass occupies residues 233–256 (FGFEAAAWYWHFVDVIWLFLYMSI). Residues 257 to 261 (YWWGS) lie on the Mitochondrial intermembrane side of the membrane.

It belongs to the cytochrome c oxidase subunit 3 family. Component of the cytochrome c oxidase (complex IV, CIV), a multisubunit enzyme composed of 14 subunits. The complex is composed of a catalytic core of 3 subunits MT-CO1, MT-CO2 and MT-CO3, encoded in the mitochondrial DNA, and 11 supernumerary subunits COX4I, COX5A, COX5B, COX6A, COX6B, COX6C, COX7A, COX7B, COX7C, COX8 and NDUFA4, which are encoded in the nuclear genome. The complex exists as a monomer or a dimer and forms supercomplexes (SCs) in the inner mitochondrial membrane with NADH-ubiquinone oxidoreductase (complex I, CI) and ubiquinol-cytochrome c oxidoreductase (cytochrome b-c1 complex, complex III, CIII), resulting in different assemblies (supercomplex SCI(1)III(2)IV(1) and megacomplex MCI(2)III(2)IV(2)).

It localises to the mitochondrion inner membrane. It catalyses the reaction 4 Fe(II)-[cytochrome c] + O2 + 8 H(+)(in) = 4 Fe(III)-[cytochrome c] + 2 H2O + 4 H(+)(out). Component of the cytochrome c oxidase, the last enzyme in the mitochondrial electron transport chain which drives oxidative phosphorylation. The respiratory chain contains 3 multisubunit complexes succinate dehydrogenase (complex II, CII), ubiquinol-cytochrome c oxidoreductase (cytochrome b-c1 complex, complex III, CIII) and cytochrome c oxidase (complex IV, CIV), that cooperate to transfer electrons derived from NADH and succinate to molecular oxygen, creating an electrochemical gradient over the inner membrane that drives transmembrane transport and the ATP synthase. Cytochrome c oxidase is the component of the respiratory chain that catalyzes the reduction of oxygen to water. Electrons originating from reduced cytochrome c in the intermembrane space (IMS) are transferred via the dinuclear copper A center (CU(A)) of subunit 2 and heme A of subunit 1 to the active site in subunit 1, a binuclear center (BNC) formed by heme A3 and copper B (CU(B)). The BNC reduces molecular oxygen to 2 water molecules using 4 electrons from cytochrome c in the IMS and 4 protons from the mitochondrial matrix. This chain is Cytochrome c oxidase subunit 3 (MT-CO3), found in Struthio camelus (Common ostrich).